The primary structure comprises 564 residues: Probable metalloprotease ARX1 (564 aa).

It belongs to the peptidase M24 family. Component of the nucleoplasmic and cytoplasmic pre-60S ribosomal particles.

The protein resides in the cytoplasm. It localises to the nucleus. Functionally, probable metalloprotease involved in proper assembly of pre-ribosomal particles during the biogenesis of the 60S ribosomal subunit. Accompanies the pre-60S particles to the cytoplasm. The polypeptide is Probable metalloprotease ARX1 (ARX1) (Candida albicans (strain SC5314 / ATCC MYA-2876) (Yeast)).